The following is a 213-amino-acid chain: MMKFLLIAAVAFVAVSADPIHYDKITEEINKAIDDAIAAIEQSETIDPMKVPDHADKFERHVGIVDFKGELAMRNIEARGLKQMKRQGDANVKGEEGIVKAHLLIGVHDDIVSMEYDLAYKLGDLHPTTHVISDIQDFVVALSLEISDEGNITMTSFEVRQFANVVNHIGGLSILDPIFGVLSDVLTAIFQDTVRKEMTKVLAPAFKRELEKN.

The signal sequence occupies residues 1 to 17 (MMKFLLIAAVAFVAVSA). Asn-151 carries an N-linked (GlcNAc...) asparagine glycan.

Belongs to the mite group 7 allergen family.

The protein resides in the secreted. In Dermatophagoides farinae (American house dust mite), this protein is Mite allergen Der f 7 (DERF7).